A 387-amino-acid polypeptide reads, in one-letter code: Postreplication repair E3 ubiquitin-protein ligase rad18 (387 aa).

The RING-type zinc finger occupies 29 to 67 (CLICHEYFRAPLITSCSHTFCSFCIRDYLREHPMCPACR). The interval 119 to 153 (DSASGDEEWEDDLASNSSPASIAKKTSRDSKKRKR) is disordered. Residues 122 to 131 (SGDEEWEDDL) show a composition bias toward acidic residues. The UBZ4-type zinc finger occupies 156-183 (LVHCPACSNLVPHNQINQHLDSCLNSPS). Cys159, Cys162, His174, and Cys178 together coordinate Zn(2+). Residues 174-206 (HLDSCLNSPSSPSSSSSPYKNKDNSKSNSLLSF) are disordered. A compositionally biased stretch (low complexity) spans 177–192 (SCLNSPSSPSSSSSPY). One can recognise an SAP domain in the interval 240–274 (YALLSESKIRSKLSEMGLPTDGHKQLLQRRHAKWV). The tract at residues 335–387 (KQSTTNKNDSLRNTAVESSTEPSTSNGFPATSVSPPLTIDLTNSQTGSDGPQS) is disordered.

It belongs to the RAD18 family. As to quaternary structure, interacts with E2 ubc2, forming a complex with ubiquitin ligase activity.

It is found in the nucleus. It carries out the reaction S-ubiquitinyl-[E2 ubiquitin-conjugating enzyme]-L-cysteine + [acceptor protein]-L-lysine = [E2 ubiquitin-conjugating enzyme]-L-cysteine + N(6)-ubiquitinyl-[acceptor protein]-L-lysine.. The protein operates within protein modification; protein ubiquitination. In terms of biological role, E3 RING-finger protein, member of the UBC2/RAD6 epistasis group. Associates to the E2 ubiquitin conjugating enzyme ubc2/rad6 to form the ubc2-rad18 ubiquitin ligase complex involved in postreplicative repair (PRR) of damaged DNA. The chain is Postreplication repair E3 ubiquitin-protein ligase rad18 (rhp18) from Schizosaccharomyces pombe (strain 972 / ATCC 24843) (Fission yeast).